The primary structure comprises 210 residues: Orotate phosphoribosyltransferase (210 aa).

Residues Arg97, Lys101, His103, and 123 to 131 (EDLISTGGS) each bind 5-phospho-alpha-D-ribose 1-diphosphate. Ser127 contacts orotate.

This sequence belongs to the purine/pyrimidine phosphoribosyltransferase family. PyrE subfamily. As to quaternary structure, homodimer. It depends on Mg(2+) as a cofactor.

It catalyses the reaction orotidine 5'-phosphate + diphosphate = orotate + 5-phospho-alpha-D-ribose 1-diphosphate. The protein operates within pyrimidine metabolism; UMP biosynthesis via de novo pathway; UMP from orotate: step 1/2. In terms of biological role, catalyzes the transfer of a ribosyl phosphate group from 5-phosphoribose 1-diphosphate to orotate, leading to the formation of orotidine monophosphate (OMP). This is Orotate phosphoribosyltransferase from Enterococcus faecalis (strain ATCC 700802 / V583).